A 279-amino-acid chain; its full sequence is Release factor glutamine methyltransferase (279 aa).

Residues 118–122 (GTGSG), Asp-141, and Asn-182 each bind S-adenosyl-L-methionine. A substrate-binding site is contributed by 182–185 (NPPY).

The protein belongs to the protein N5-glutamine methyltransferase family. PrmC subfamily.

The catalysed reaction is L-glutaminyl-[peptide chain release factor] + S-adenosyl-L-methionine = N(5)-methyl-L-glutaminyl-[peptide chain release factor] + S-adenosyl-L-homocysteine + H(+). Functionally, methylates the class 1 translation termination release factors RF1/PrfA and RF2/PrfB on the glutamine residue of the universally conserved GGQ motif. The protein is Release factor glutamine methyltransferase of Streptococcus pneumoniae (strain ATCC BAA-255 / R6).